The following is a 447-amino-acid chain: Blue-light photoreceptor PHR2 (447 aa).

Polar residues predominate over residues methionine 1–threonine 14. A disordered region spans residues methionine 1–glutamine 20. The region spanning arginine 115–leucine 249 is the Photolyase/cryptochrome alpha/beta domain.

The protein belongs to the DNA photolyase class-1 family. FAD is required as a cofactor.

The sequence is that of Blue-light photoreceptor PHR2 (PHR2) from Arabidopsis thaliana (Mouse-ear cress).